The primary structure comprises 643 residues: NAD-dependent malic enzyme, mitochondrial (643 aa).

The N-terminal 38 residues, P1 to N38, are a transit peptide targeting the mitochondrion. Fumarate is bound by residues Q116, R119, and R143. Y164 (proton donor) is an active-site residue. R219 serves as a coordination point for (S)-malate. Position 219 (R219) interacts with NAD(+). The active-site Proton acceptor is the K237. A divalent metal cation is bound by residues E309 and D310. Residues N313, D333, A366, A369, and N472 each contribute to the NAD(+) site. D333 is a binding site for a divalent metal cation. Positions 472 and 516 each coordinate (S)-malate.

It belongs to the malic enzymes family. In terms of assembly, homotetramer. Requires Mg(2+) as cofactor. Mn(2+) serves as cofactor.

The protein localises to the mitochondrion matrix. The enzyme catalyses (S)-malate + NAD(+) = pyruvate + CO2 + NADH. It catalyses the reaction oxaloacetate + H(+) = pyruvate + CO2. Subject to allosteric activation by fumarate. NAD-dependent mitochondrial malic enzyme that catalyzes the oxidative decarboxylation of malate to pyruvate. In Ascaris suum (Pig roundworm), this protein is NAD-dependent malic enzyme, mitochondrial.